A 359-amino-acid chain; its full sequence is MIGQPQSPEYKLSPEETDALFRSLLHKEGTWVEWGVGCQQLQQSGHSAQEIFEQTGFQTAQQNMIIVAAQVYQSIASSGVPEDLLAYCRGPRSDVLYELRILSHSQRAIAAQVCQAKSLEFDGAKELARAMQEFARLPQIPDSFTEHPGDAVAYQAWRSAKQKKDLQDRTRLIAKGLKFAHSATARQKIEQLLSDLTTSPTKAAPLLPLYRYDEDTNVPLLIPVAGSLPLESDRLLSVPPLKQASPFNLVTVATATSLVPLPSWQNVLTAGDPVVIFHQTDQLPQPIPGKPEPVLILLDRQQTTWNDNSYFAVDADGKVELGWFAEAPIAKILGQVLLVMRPKKILDENNLREPWQMDD.

An N-terminal alpha-helix region spans residues 12-195 (LSPEETDALF…RQKIEQLLSD (184 aa)). The C-terminal beta-sheet stretch occupies residues 219 to 345 (PLLIPVAGSL…VLLVMRPKKI (127 aa)).

Belongs to the RAF family. As to quaternary structure, homodimer. Forms an RbcL(8)-Raf1(8) complex. Forms complexes of many stoichiometries with RbcL with and without RbcS. RbcX and Raf1 can bind simultaneously to RbcL.

The protein localises to the cytoplasm. In terms of biological role, a major RuBisCO chaperone. Acts after GroEL-GroES chaperonin to fold and/or assemble the large subunit of RuBisCO (ccbL, rbcL). Cooperates with RbcX in RbcL folding, plays the major role in assembly of dimers into RbcL(8)-Raf1(8) intermediate complexes. RbcS replaces Raf1, leading to holoenzyme formation. Functionally, raf1 and RbcX are probably functionally redundant; it has been suggested they may cooperate. The sequence is that of RuBisCO accumulation factor 1 from Picosynechococcus sp. (strain ATCC 27264 / PCC 7002 / PR-6) (Agmenellum quadruplicatum).